The primary structure comprises 444 residues: Tubulin beta-8 chain (444 aa).

An MREI motif motif is present at residues 1 to 4 (MREI). The GTP site is built by Q11, E69, S138, G142, T143, and G144. Position 69 (E69) interacts with Mg(2+). S172 is modified (phosphoserine; by CDK1). Residues N204 and N226 each coordinate GTP. A disordered region spans residues 423-444 (QQYQDATAEEEEDEEYAEEEVA). Residues 429–444 (TAEEEEDEEYAEEEVA) are compositionally biased toward acidic residues. E436 bears the 5-glutamyl polyglutamate mark.

Belongs to the tubulin family. As to quaternary structure, dimer of alpha and beta chains. A typical microtubule is a hollow water-filled tube with an outer diameter of 25 nm and an inner diameter of 15 nM. Alpha-beta heterodimers associate head-to-tail to form protofilaments running lengthwise along the microtubule wall with the beta-tubulin subunit facing the microtubule plus end conferring a structural polarity. Microtubules usually have 13 protofilaments but different protofilament numbers can be found in some organisms and specialized cells. Mg(2+) is required as a cofactor. In terms of processing, some glutamate residues at the C-terminus are polyglycylated, resulting in polyglycine chains on the gamma-carboxyl group. Glycylation is mainly limited to tubulin incorporated into axonemes (cilia and flagella) whereas glutamylation is prevalent in neuronal cells, centrioles, axonemes, and the mitotic spindle. Both modifications can coexist on the same protein on adjacent residues, and lowering polyglycylation levels increases polyglutamylation, and reciprocally. Cilia and flagella glycylation is required for their stability and maintenance. Flagella glycylation controls sperm motility. Post-translationally, some glutamate residues at the C-terminus are polyglutamylated, resulting in polyglutamate chains on the gamma-carboxyl group. Polyglutamylation plays a key role in microtubule severing by spastin (SPAST). SPAST preferentially recognizes and acts on microtubules decorated with short polyglutamate tails: severing activity by SPAST increases as the number of glutamates per tubulin rises from one to eight, but decreases beyond this glutamylation threshold. Glutamylation is also involved in cilia motility. Phosphorylated on Ser-172 by CDK1 during the cell cycle, from metaphase to telophase, but not in interphase. This phosphorylation inhibits tubulin incorporation into microtubules.

It localises to the cytoplasm. It is found in the cytoskeleton. The protein localises to the spindle. Its function is as follows. Tubulin is the major constituent of microtubules, a cylinder consisting of laterally associated linear protofilaments composed of alpha- and beta-tubulin heterodimers. Microtubules grow by the addition of GTP-tubulin dimers to the microtubule end, where a stabilizing cap forms. Below the cap, tubulin dimers are in GDP-bound state, owing to GTPase activity of alpha-tubulin. Has a key role in meiotic spindle assembly and oocyte maturation. The protein is Tubulin beta-8 chain (TUBB8) of Pan troglodytes (Chimpanzee).